Reading from the N-terminus, the 198-residue chain is Probable thymidylate kinase (198 aa).

7–14 is an ATP binding site; it reads GIDGAGKS.

This sequence belongs to the thymidylate kinase family.

It catalyses the reaction dTMP + ATP = dTDP + ADP. The sequence is that of Probable thymidylate kinase from Methanocorpusculum labreanum (strain ATCC 43576 / DSM 4855 / Z).